Reading from the N-terminus, the 371-residue chain is MSTAERAPILLTPGPLTTSYRTRRAMMVDWGSWDSDFNELTASVCQRLLKIVGGEGSHTCVPLQGSGTFAVEAAIGTLVPRDGKVLVLINGAYGKRLAKICEVLQRPFSTLETEENVPTTAADVERLLAADPAISHVALIHCETSTGILNPLEAIAKVVERHGKRLIVDAMSSFGAIGIDARKVPFDALIAASGKCLEGVPGMGFVFARSAALEASAGNCHSLAMDLQDQHAYMRKTGQWRFTPPTHVVAALHEALSQYEEEGGLPARQRRYASNCETLLGEMARLGFRSFLPAEIQAPIIVTFHAPRDPRYRFADFYQRVREKGFILYPGKLTQVETFRVGCIGHVDAAEMRQAVAAIGEALRELEVLEI.

At K195 the chain carries N6-(pyridoxal phosphate)lysine.

The protein belongs to the class-V pyridoxal-phosphate-dependent aminotransferase family. PhnW subfamily. Homotetramer; however this is for an enzyme with a molecular weight of 16500, which is in disagreement with the weight of this protein. Pyridoxal 5'-phosphate serves as cofactor.

The enzyme catalyses (2-aminoethyl)phosphonate + pyruvate = phosphonoacetaldehyde + L-alanine. Inhibited by phosphonic acids and very slightly inhibited by aminophosphonic acids. Functionally, involved in phosphonate degradation. This chain is 2-aminoethylphosphonate--pyruvate transaminase (phnW), found in Pseudomonas aeruginosa (strain ATCC 15692 / DSM 22644 / CIP 104116 / JCM 14847 / LMG 12228 / 1C / PRS 101 / PAO1).